The sequence spans 504 residues: Aspartyl/glutamyl-tRNA(Asn/Gln) amidotransferase subunit B (504 aa).

It belongs to the GatB/GatE family. GatB subfamily. Heterotrimer of A, B and C subunits.

It catalyses the reaction L-glutamyl-tRNA(Gln) + L-glutamine + ATP + H2O = L-glutaminyl-tRNA(Gln) + L-glutamate + ADP + phosphate + H(+). The enzyme catalyses L-aspartyl-tRNA(Asn) + L-glutamine + ATP + H2O = L-asparaginyl-tRNA(Asn) + L-glutamate + ADP + phosphate + 2 H(+). Its function is as follows. Allows the formation of correctly charged Asn-tRNA(Asn) or Gln-tRNA(Gln) through the transamidation of misacylated Asp-tRNA(Asn) or Glu-tRNA(Gln) in organisms which lack either or both of asparaginyl-tRNA or glutaminyl-tRNA synthetases. The reaction takes place in the presence of glutamine and ATP through an activated phospho-Asp-tRNA(Asn) or phospho-Glu-tRNA(Gln). The chain is Aspartyl/glutamyl-tRNA(Asn/Gln) amidotransferase subunit B from Tropheryma whipplei (strain TW08/27) (Whipple's bacillus).